The chain runs to 605 residues: Endonuclease 8-like 3 (605 aa).

Catalysis depends on valine 2, which acts as the Schiff-base intermediate with DNA; via amino nitrogen. Asparagine 192 and arginine 271 together coordinate DNA. An FPG-type zinc finger spans residues 247–281; it reads KVYKRPNCGQCHCRITVCRFGDNNRMTYFCPHCQK. The segment at 317–346 adopts a RanBP2-type zinc-finger fold; sequence SEEHWTCVVCTLINKPSSKACDACLTSRPI. Serine 450 carries the post-translational modification Phosphoserine. The disordered stretch occupies residues 456-477; sequence ESKLFSPAHKKPKTAQYSSPEL. Positions 507, 510, 533, 541, 554, 556, 579, and 587 each coordinate Zn(2+). 2 GRF-type zinc fingers span residues 507–550 and 554–596; these read CSKH…ADLS and CNHG…AENG.

The protein belongs to the FPG family. In terms of tissue distribution, expressed in keratinocytes and embryonic fibroblasts (at protein level). Also detected in thymus, testis and fetal lung primary fibroblasts.

It localises to the nucleus. The protein resides in the chromosome. The enzyme catalyses 2'-deoxyribonucleotide-(2'-deoxyribose 5'-phosphate)-2'-deoxyribonucleotide-DNA = a 3'-end 2'-deoxyribonucleotide-(2,3-dehydro-2,3-deoxyribose 5'-phosphate)-DNA + a 5'-end 5'-phospho-2'-deoxyribonucleoside-DNA + H(+). Functionally, DNA glycosylase which prefers single-stranded DNA (ssDNA), or partially ssDNA structures such as bubble and fork structures, to double-stranded DNA (dsDNA). Mediates interstrand cross-link repair in response to replication stress: acts by mediating DNA glycosylase activity, cleaving one of the two N-glycosyl bonds comprising the interstrand cross-link, which avoids the formation of a double-strand break but generates an abasic site that is bypassed by translesion synthesis polymerases. In vitro, displays strong glycosylase activity towards the hydantoin lesions spiroiminodihydantoin (Sp) and guanidinohydantoin (Gh) in both ssDNA and dsDNA; also recognizes FapyA, FapyG, 5-OHU, 5-OHC, 5-OHMH, Tg and 8-oxoA lesions in ssDNA. No activity on 8-oxoG detected. Also shows weak DNA-(apurinic or apyrimidinic site) lyase activity. In vivo, appears to be the primary enzyme involved in removing Sp and Gh from ssDNA in neonatal tissues. The sequence is that of Endonuclease 8-like 3 (NEIL3) from Homo sapiens (Human).